Here is a 49-residue protein sequence, read N- to C-terminus: Putative exported peptide YydF (49 aa).

Suggested to be the precursor for an exported, modified peptide that has antimicrobial and/or signaling properties. Synthesis requires YydG and YydH; the peptide is proposed to be exported by the YydIJ transporter. In the absence of the transporter, the modified peptide activates the LiaRS two-component regulatory system, possibly by eliciting cell envelope stress. This activation can occur in trans in cocultured cells lacking either the transporter or the whole operon. This chain is Putative exported peptide YydF (yydF), found in Bacillus subtilis (strain 168).